The following is a 930-amino-acid chain: Translation initiation factor IF-2 (930 aa).

A compositionally biased stretch (low complexity) spans 50-67 (FKPAAAPKVEAKPAAPKV). Disordered regions lie at residues 50 to 195 (FKPA…PRID) and 260 to 346 (EVVP…HELP). 2 stretches are compositionally biased toward basic and acidic residues: residues 68-90 (SAEK…EAKP) and 110-125 (FKAE…AERR). Over residues 129-141 (KGNNRDQQQNGNR) the composition is skewed to low complexity. 2 stretches are compositionally biased toward basic and acidic residues: residues 157-167 (RDNRRFNDQAK) and 262-295 (VPEK…DGPR). The segment covering 309–318 (NQKNSNWNNN) has biased composition (low complexity). Basic and acidic residues predominate over residues 337–346 (VTERKFHELP). In terms of domain architecture, tr-type G spans 432–599 (ERPPVVTIMG…TVLLVAEIQE (168 aa)). Positions 441–448 (GHVDHGKT) are G1. 441-448 (GHVDHGKT) contributes to the GTP binding site. The interval 466–470 (GITQH) is G2. A G3 region spans residues 487–490 (DTPG). GTP is bound by residues 487–491 (DTPGH) and 541–544 (NKID). The tract at residues 541–544 (NKID) is G4. A G5 region spans residues 577–579 (SAK).

The protein belongs to the TRAFAC class translation factor GTPase superfamily. Classic translation factor GTPase family. IF-2 subfamily.

The protein resides in the cytoplasm. In terms of biological role, one of the essential components for the initiation of protein synthesis. Protects formylmethionyl-tRNA from spontaneous hydrolysis and promotes its binding to the 30S ribosomal subunits. Also involved in the hydrolysis of GTP during the formation of the 70S ribosomal complex. The polypeptide is Translation initiation factor IF-2 (Streptococcus pneumoniae (strain ATCC BAA-255 / R6)).